We begin with the raw amino-acid sequence, 382 residues long: Osmoprotectant import ATP-binding protein OsmV (382 aa).

The ABC transporter domain occupies 2–241; that stretch reads IKLENLTKQF…PANEFVGSFV (240 aa). 39–46 is an ATP binding site; it reads GPSGCGKT. CBS domains are found at residues 258–320 and 322–373; these read VTDQ…THPF and ITGK…GRTR.

The protein belongs to the ABC transporter superfamily. The complex is composed of two ATP-binding proteins (OsmV), two transmembrane proteins (OsmW and OsmY) and a solute-binding protein (OsmX).

It is found in the cell inner membrane. In terms of biological role, part of the OsmU ABC transporter complex, which is involved in the uptake of osmoprotectants such as choline-O-sulfate and glycine betaine. Probably responsible for energy coupling to the transport system. The polypeptide is Osmoprotectant import ATP-binding protein OsmV (osmV) (Salmonella typhimurium (strain LT2 / SGSC1412 / ATCC 700720)).